Here is a 351-residue protein sequence, read N- to C-terminus: Dihydroorotate dehydrogenase (quinone) (351 aa).

FMN contacts are provided by residues 65 to 69 (AGLDK) and Thr89. Residue Lys69 participates in substrate binding. 114-118 (NRLGF) contributes to the substrate binding site. Positions 150 and 183 each coordinate FMN. Residue Asn183 participates in substrate binding. Ser186 functions as the Nucleophile in the catalytic mechanism. Asn188 is a binding site for substrate. The FMN site is built by Lys228 and Thr256. Residue 257-258 (NT) participates in substrate binding. FMN-binding positions include Gly279, Gly308, and 329–330 (YT).

It belongs to the dihydroorotate dehydrogenase family. Type 2 subfamily. As to quaternary structure, monomer. It depends on FMN as a cofactor.

The protein localises to the cell membrane. The enzyme catalyses (S)-dihydroorotate + a quinone = orotate + a quinol. Its pathway is pyrimidine metabolism; UMP biosynthesis via de novo pathway; orotate from (S)-dihydroorotate (quinone route): step 1/1. In terms of biological role, catalyzes the conversion of dihydroorotate to orotate with quinone as electron acceptor. The polypeptide is Dihydroorotate dehydrogenase (quinone) (Acidovorax ebreus (strain TPSY) (Diaphorobacter sp. (strain TPSY))).